Here is a 1680-residue protein sequence, read N- to C-terminus: GRIP and coiled-coil domain-containing protein 2 (1680 aa).

The residue at position 1 (Met1) is an N-acetylmethionine. A compositionally biased stretch (low complexity) spans 1–14; it reads MEDSAPDAVAAAPS. Disordered regions lie at residues 1 to 23 and 1468 to 1522; these read MEDS…KLET and KSEP…SSAG. The stretch at 31–1614 forms a coiled coil; sequence KFAKKQMMLL…REKSVANLEY (1584 aa). The segment covering 1469–1484 has biased composition (polar residues); that stretch reads SEPSTRSPASSHQPSK. 2 positions are modified to phosphoserine: Ser1475 and Ser1479. Residues 1570-1609 are mediates interaction with RAB6A; sequence HLNGLLRETEATNAILMEQIKLLKSEIRRLERNQEREKSV. A mediates interaction with RAB9A region spans residues 1570 to 1680; the sequence is HLNGLLRETE…SYLHSWSGLR (111 aa). Residues 1605–1655 enclose the GRIP domain; that stretch reads REKSVANLEYLKNVLLRFIFLKPGSERERLLPVIDTMLQLSPEEKGKLATV.

Homodimer. Interacts (via GRIP domain) with RAB6A (preferentially in its GTP-bound form). May interact (RAB6A-dependent) with ARL1; might be involved in GCC2 Golgi localization. Interacts (probably via GRIP domain) with RAB9A (preferentially in its GTP-bound form). Interacts with CLASP1 and CLASP2; recruits both proteins to membranes of the TGN. Interacts with STX16.

It is found in the cytoplasm. The protein resides in the golgi apparatus. It localises to the trans-Golgi network membrane. In terms of biological role, golgin which probably tethers transport vesicles to the trans-Golgi network (TGN) and regulates vesicular transport between the endosomes and the Golgi. As a RAB9A effector it is involved in recycling of the mannose 6-phosphate receptor from the late endosomes to the TGN. May also play a role in transport between the recycling endosomes and the Golgi. Required for maintenance of the Golgi structure, it is involved in the biogenesis of noncentrosomal, Golgi-associated microtubules through recruitment of CLASP1 and CLASP2. This Mus musculus (Mouse) protein is GRIP and coiled-coil domain-containing protein 2 (Gcc2).